Reading from the N-terminus, the 458-residue chain is Ribulose bisphosphate carboxylase large chain (458 aa).

Lysine 7 carries the post-translational modification N6,N6,N6-trimethyllysine. Residues asparagine 116 and threonine 166 each coordinate substrate. Residue lysine 168 is the Proton acceptor of the active site. Residue lysine 170 participates in substrate binding. Positions 194, 196, and 197 each coordinate Mg(2+). Lysine 194 carries the N6-carboxylysine modification. Catalysis depends on histidine 287, which acts as the Proton acceptor. Substrate contacts are provided by arginine 288, histidine 320, and serine 372.

This sequence belongs to the RuBisCO large chain family. Type I subfamily. Heterohexadecamer of 8 large chains and 8 small chains; disulfide-linked. The disulfide link is formed within the large subunit homodimers. Mg(2+) is required as a cofactor. The disulfide bond which can form in the large chain dimeric partners within the hexadecamer appears to be associated with oxidative stress and protein turnover.

It localises to the plastid. The protein resides in the chloroplast. It catalyses the reaction 2 (2R)-3-phosphoglycerate + 2 H(+) = D-ribulose 1,5-bisphosphate + CO2 + H2O. The catalysed reaction is D-ribulose 1,5-bisphosphate + O2 = 2-phosphoglycolate + (2R)-3-phosphoglycerate + 2 H(+). Functionally, ruBisCO catalyzes two reactions: the carboxylation of D-ribulose 1,5-bisphosphate, the primary event in carbon dioxide fixation, as well as the oxidative fragmentation of the pentose substrate in the photorespiration process. Both reactions occur simultaneously and in competition at the same active site. The sequence is that of Ribulose bisphosphate carboxylase large chain from Gladiolus gueinzii (Coastal gladiolus).